Here is a 193-residue protein sequence, read N- to C-terminus: Protein TEX261 (193 aa).

5 helical membrane-spanning segments follow: residues 1–21 (MVGVTLANVLPVCLALLPPPA), 39–59 (SRIIKYMIWFSTAVLIGLYVF), 67–87 (IGVGLFTNLVYFGLLQTFPFI), 94–114 (FILSCGLVVVNHYLAFQFFAE), and 122–142 (VLAYFTFCLWIIPFAFFVSLS).

It belongs to the SVP26 family.

It localises to the membrane. This is Protein TEX261 (TEX261) from Bos taurus (Bovine).